Reading from the N-terminus, the 77-residue chain is MRKQNLIEMEGIVTESLPNAMFRVCLDNGCQVLAHISGKIRKNYIRILLGDRVKVELSPYDLTKGRITYRLRTRSPS.

Residues 1–72 form the S1-like domain; sequence MRKQNLIEME…TKGRITYRLR (72 aa).

It belongs to the IF-1 family. As to quaternary structure, component of the 30S ribosomal translation pre-initiation complex which assembles on the 30S ribosome in the order IF-2 and IF-3, IF-1 and N-formylmethionyl-tRNA(fMet); mRNA recruitment can occur at any time during PIC assembly.

It is found in the plastid. It localises to the chloroplast. Its function is as follows. One of the essential components for the initiation of protein synthesis. Stabilizes the binding of IF-2 and IF-3 on the 30S subunit to which N-formylmethionyl-tRNA(fMet) subsequently binds. Helps modulate mRNA selection, yielding the 30S pre-initiation complex (PIC). Upon addition of the 50S ribosomal subunit IF-1, IF-2 and IF-3 are released leaving the mature 70S translation initiation complex. The chain is Translation initiation factor IF-1, chloroplastic from Staurastrum punctulatum (Green alga).